The primary structure comprises 120 residues: Large ribosomal subunit protein bL20 (120 aa).

This sequence belongs to the bacterial ribosomal protein bL20 family.

Functionally, binds directly to 23S ribosomal RNA and is necessary for the in vitro assembly process of the 50S ribosomal subunit. It is not involved in the protein synthesizing functions of that subunit. The chain is Large ribosomal subunit protein bL20 from Blochmanniella pennsylvanica (strain BPEN).